Reading from the N-terminus, the 186-residue chain is Calcium-binding protein NCSA (186 aa).

4 EF-hand domains span residues 40 to 58 (SGTI…MGVG), 66 to 93 (LFNV…ITRG), 94 to 129 (TPEE…MYKL), and 142 to 177 (DPHD…NPDI). The Ca(2+) site is built by Asp-107, Asp-109, Asn-111, Tyr-113, Glu-118, Asp-155, Asp-157, Asp-159, Tyr-161, and Glu-166.

It belongs to the recoverin family.

Functionally, may prevent cells from entering development prematurely in the presence of environmental nutrients. The chain is Calcium-binding protein NCSA (ncsA) from Dictyostelium discoideum (Social amoeba).